Consider the following 69-residue polypeptide: Beta-defensin 43 (69 aa).

A signal peptide spans 1 to 22 (MRVLFSILGVLTLLSIVPLARS). Intrachain disulfides connect Cys-29-Cys-56 and Cys-35-Cys-49.

This sequence belongs to the beta-defensin family.

Its subcellular location is the secreted. Has bactericidal activity. This chain is Beta-defensin 43 (Defb43), found in Mus musculus (Mouse).